The primary structure comprises 200 residues: High frequency lysogenization protein HflD homolog (200 aa).

The protein belongs to the HflD family.

It localises to the cytoplasm. Its subcellular location is the cell inner membrane. This is High frequency lysogenization protein HflD homolog from Pseudoalteromonas translucida (strain TAC 125).